Here is an 882-residue protein sequence, read N- to C-terminus: Chondroitin sulfate synthase 3 (882 aa).

Residues 1–7 (MAVRSRR) are Cytoplasmic-facing. The helical; Signal-anchor for type II membrane protein transmembrane segment at 8 to 28 (PWMSVALGLVLGFTAASWLIA) threads the bilayer. Residues 29 to 882 (PRVAELSERK…LGVRYNRTLS (854 aa)) are Lumenal-facing. Residues 46–167 (SYYGRSAAGP…GDGGAAAPSA (122 aa)) form a disordered region. Low complexity-rich tracts occupy residues 59–69 (AQQPLPQPQSR) and 120–131 (GATGLPGAPAAE). Asn155, Asn279, and Asn710 each carry an N-linked (GlcNAc...) asparagine glycan. A divalent metal cation-binding residues include Asp720 and His834. An N-linked (GlcNAc...) asparagine glycan is attached at Asn878.

It belongs to the chondroitin N-acetylgalactosaminyltransferase family. It depends on Co(2+) as a cofactor. Mn(2+) serves as cofactor. Requires Cd(2+) as cofactor. As to expression, detected at low levels in brain, cerebral cortex, uterus and small intestine.

It is found in the golgi apparatus. Its subcellular location is the golgi stack membrane. It catalyses the reaction 3-O-(beta-D-GlcA-(1-&gt;3)-beta-D-GalNAc-(1-&gt;4)-beta-D-GlcA-(1-&gt;3)-beta-D-Gal-(1-&gt;3)-beta-D-Gal-(1-&gt;4)-beta-D-Xyl)-L-seryl-[protein] + UDP-N-acetyl-alpha-D-galactosamine = 3-O-(beta-D-GalNAc-(1-&gt;4)-beta-D-GlcA-(1-&gt;3)-beta-D-GalNAc-(1-&gt;4)-beta-D-GlcA-(1-&gt;3)-beta-D-Gal-(1-&gt;3)-beta-D-Gal-(1-&gt;4)-beta-D-Xyl)-L-seryl-[protein] + UDP + H(+). The enzyme catalyses 3-O-{beta-D-GlcA-(1-&gt;3)-[beta-D-GalNAc-(1-&gt;4)-beta-D-GlcA-(1-&gt;3)](n)-beta-D-GalNAc-(1-&gt;4)-beta-D-GlcA-(1-&gt;3)-beta-D-Gal-(1-&gt;3)-beta-D-Gal-(1-&gt;4)-beta-D-Xyl}-L-seryl-[protein] + UDP-N-acetyl-alpha-D-galactosamine = 3-O-{[beta-D-GalNAc-(1-&gt;4)-beta-D-GlcA-(1-&gt;3)](n+1)-beta-D-GalNAc-(1-&gt;4)-beta-D-GlcA-(1-&gt;3)-beta-D-Gal-(1-&gt;3)-beta-D-Gal-(1-&gt;4)-beta-D-Xyl}-L-seryl-[protein] + UDP + H(+). It carries out the reaction 3-O-(beta-D-GalNAc-(1-&gt;4)-beta-D-GlcA-(1-&gt;3)-beta-D-Gal-(1-&gt;3)-beta-D-Gal-(1-&gt;4)-beta-D-Xyl)-L-seryl-[protein] + UDP-alpha-D-glucuronate = 3-O-(beta-D-GlcA-(1-&gt;3)-beta-D-GalNAc-(1-&gt;4)-beta-D-GlcA-(1-&gt;3)-beta-D-Gal-(1-&gt;3)-beta-D-Gal-(1-&gt;4)-beta-D-Xyl)-L-seryl-[protein] + UDP + H(+). The catalysed reaction is 3-O-{[beta-D-GalNAc-(1-&gt;4)-beta-D-GlcA-(1-&gt;3)](n)-beta-D-GalNAc-(1-&gt;4)-beta-D-GlcA-(1-&gt;3)-beta-D-Gal-(1-&gt;3)-beta-D-Gal-(1-&gt;4)-beta-D-Xyl}-L-seryl-[protein] + UDP-alpha-D-glucuronate = 3-O-{beta-D-GlcA-(1-&gt;3)-[beta-D-GalNAc-(1-&gt;4)-beta-D-GlcA-(1-&gt;3)](n)-beta-D-GalNAc-(1-&gt;4)-beta-D-GlcA-(1-&gt;3)-beta-D-Gal-(1-&gt;3)-beta-D-Gal-(1-&gt;4)-beta-D-Xyl}-L-seryl-[protein] + UDP + H(+). Functionally, has both beta-1,3-glucuronic acid and beta-1,4-N-acetylgalactosamine transferase activity. Transfers glucuronic acid (GlcUA) from UDP-GlcUA and N-acetylgalactosamine (GalNAc) from UDP-GalNAc to the non-reducing end of the elongating chondroitin polymer. Specific activity is much reduced compared to CHSY1. The sequence is that of Chondroitin sulfate synthase 3 (CHSY3) from Homo sapiens (Human).